A 103-amino-acid chain; its full sequence is Large ribosomal subunit protein uL24 (103 aa).

Belongs to the universal ribosomal protein uL24 family. In terms of assembly, part of the 50S ribosomal subunit.

Functionally, one of two assembly initiator proteins, it binds directly to the 5'-end of the 23S rRNA, where it nucleates assembly of the 50S subunit. Its function is as follows. One of the proteins that surrounds the polypeptide exit tunnel on the outside of the subunit. The polypeptide is Large ribosomal subunit protein uL24 (Synechococcus sp. (strain CC9311)).